Consider the following 128-residue polypeptide: Protein Wnt-10 (128 aa).

5 cysteine pairs are disulfide-bonded: cysteine 3-cysteine 17, cysteine 5-cysteine 12, cysteine 74-cysteine 105, cysteine 90-cysteine 100, and cysteine 127-cysteine 128. The O-palmitoleoyl serine; by PORCN moiety is linked to residue serine 9. N-linked (GlcNAc...) asparagine glycosylation is present at asparagine 91.

This sequence belongs to the Wnt family. Post-translationally, palmitoleoylation is required for efficient binding to frizzled receptors. Depalmitoleoylation leads to Wnt signaling pathway inhibition. As to expression, in embryo, in dorsal hindbrain; in adults, in brain.

The protein resides in the secreted. The protein localises to the extracellular space. It is found in the extracellular matrix. Functionally, ligand for members of the frizzled family of seven transmembrane receptors. Probable developmental protein. May be a signaling molecule which affects the development of discrete regions of tissues. Is likely to signal over only few cell diameters. In Xenopus laevis (African clawed frog), this protein is Protein Wnt-10 (wnt10).